Here is a 431-residue protein sequence, read N- to C-terminus: STE20-related kinase adapter protein alpha (431 aa).

2 positions are modified to phosphoserine: Ser-2 and Ser-46. Residues 69–379 (YELLTVIGKG…ASTLLNHSFF (311 aa)) form the Protein kinase domain. The disordered stretch occupies residues 310 to 347 (LTMSPSRSVANSGLSDSLTTSTPRPSNGDSPSHPYHRT). Polar residues predominate over residues 312–339 (MSPSRSVANSGLSDSLTTSTPRPSNGDS). Phosphothreonine; by LKB1 is present on residues Thr-329 and Thr-401. The residue at position 419 (Thr-419) is a Phosphothreonine.

The protein belongs to the protein kinase superfamily. STE Ser/Thr protein kinase family. STE20 subfamily. As to quaternary structure, component of a trimeric complex composed of STK11/LKB1, STRAD (STRADA or STRADB) and CAB39/MO25 (CAB39/MO25alpha or CAB39L/MO25beta): the complex tethers STK11/LKB1 in the cytoplasm and stimulates its catalytic activity.

It is found in the nucleus. The protein resides in the cytoplasm. Functionally, pseudokinase which, in complex with CAB39/MO25 (CAB39/MO25alpha or CAB39L/MO25beta), binds to and activates STK11/LKB1. Adopts a closed conformation typical of active protein kinases and binds STK11/LKB1 as a pseudosubstrate, promoting conformational change of STK11/LKB1 in an active conformation. This Pongo abelii (Sumatran orangutan) protein is STE20-related kinase adapter protein alpha (STRADA).